A 500-amino-acid polypeptide reads, in one-letter code: NAD(P)H-quinone oxidoreductase chain 4, chloroplastic (500 aa).

A run of 14 helical transmembrane segments spans residues 4–24 (FPWL…IFFL), 37–57 (ICIC…HFQL), 87–107 (IGPI…AWPI), 113–130 (LFHF…GSFS), 134–154 (LLLF…LLAM), 167–187 (FILY…GVAL), 208–228 (VLEI…LPII), 242–262 (HYST…YGLI), 272–292 (AHSI…IYAA), 305–325 (IAYS…SLTD), 330–350 (GALL…FLAG), 386–406 (LALP…GIIT), 411–431 (VLIP…LTPI), and 462–482 (LFLS…PDFV).

Belongs to the complex I subunit 4 family.

Its subcellular location is the plastid. It is found in the chloroplast thylakoid membrane. It catalyses the reaction a plastoquinone + NADH + (n+1) H(+)(in) = a plastoquinol + NAD(+) + n H(+)(out). The catalysed reaction is a plastoquinone + NADPH + (n+1) H(+)(in) = a plastoquinol + NADP(+) + n H(+)(out). The polypeptide is NAD(P)H-quinone oxidoreductase chain 4, chloroplastic (Atropa belladonna (Belladonna)).